Here is a 178-residue protein sequence, read N- to C-terminus: Large ribosomal subunit protein uL6 (178 aa).

This sequence belongs to the universal ribosomal protein uL6 family. In terms of assembly, part of the 50S ribosomal subunit.

Functionally, this protein binds to the 23S rRNA, and is important in its secondary structure. It is located near the subunit interface in the base of the L7/L12 stalk, and near the tRNA binding site of the peptidyltransferase center. In Micrococcus luteus (Micrococcus lysodeikticus), this protein is Large ribosomal subunit protein uL6.